The chain runs to 199 residues: NADH-quinone oxidoreductase subunit C (199 aa).

Belongs to the complex I 30 kDa subunit family. In terms of assembly, NDH-1 is composed of 14 different subunits. Subunits NuoB, C, D, E, F, and G constitute the peripheral sector of the complex.

The protein resides in the cell inner membrane. It catalyses the reaction a quinone + NADH + 5 H(+)(in) = a quinol + NAD(+) + 4 H(+)(out). Functionally, NDH-1 shuttles electrons from NADH, via FMN and iron-sulfur (Fe-S) centers, to quinones in the respiratory chain. The immediate electron acceptor for the enzyme in this species is believed to be ubiquinone. Couples the redox reaction to proton translocation (for every two electrons transferred, four hydrogen ions are translocated across the cytoplasmic membrane), and thus conserves the redox energy in a proton gradient. In Cupriavidus metallidurans (strain ATCC 43123 / DSM 2839 / NBRC 102507 / CH34) (Ralstonia metallidurans), this protein is NADH-quinone oxidoreductase subunit C.